Consider the following 743-residue polypeptide: Catalase-peroxidase (743 aa).

Residues 1-21 (MSENHETVVSELNEESGGGCP) are disordered. The segment at residues 108-231 (WHSAGTYRIS…LGAVQMGLIY (124 aa)) is a cross-link (tryptophyl-tyrosyl-methioninium (Trp-Tyr) (with M-257)). Residue histidine 109 is the Proton acceptor of the active site. Residues 231-257 (YVNPEGPNGTPDPLAAARDIRETFRRM) constitute a cross-link (tryptophyl-tyrosyl-methioninium (Tyr-Met) (with W-108)). Histidine 272 provides a ligand contact to heme b. The segment at 275–296 (GKTHGAGDPDNVGPEPEGAPLE) is disordered.

This sequence belongs to the peroxidase family. Peroxidase/catalase subfamily. As to quaternary structure, homodimer or homotetramer. The cofactor is heme b. Formation of the three residue Trp-Tyr-Met cross-link is important for the catalase, but not the peroxidase activity of the enzyme.

The enzyme catalyses H2O2 + AH2 = A + 2 H2O. It catalyses the reaction 2 H2O2 = O2 + 2 H2O. Bifunctional enzyme with both catalase and broad-spectrum peroxidase activity. The polypeptide is Catalase-peroxidase (Parafrankia sp. (strain EAN1pec)).